Reading from the N-terminus, the 460-residue chain is Retinoic acid receptor alpha (460 aa).

The modulating stretch occupies residues 1–87 (MASNSSSCPT…PPPLPRIYKP (87 aa)). The segment at 46-78 (HQLPVSGYSTPSPATVETQSTSSEEIVPSPPSP) is disordered. A compositionally biased stretch (polar residues) spans 52–69 (GYSTPSPATVETQSTSSE). 2 NR C4-type zinc fingers span residues 88–108 (CFVC…CEGC) and 124–148 (CHRD…LQKC). Positions 88–153 (CFVCQDKSSG…RLQKCFEVGM (66 aa)) form a DNA-binding region, nuclear receptor. Positions 154 to 182 (SKESVRNDRNKKKKDVPKTECSESYIVTP) are hinge. The 235-residue stretch at 183–417 (EVEELIEKVR…PLIQEMLENS (235 aa)) folds into the NR LBD domain. The 9aaTAD motif lies at 408-416 (PLIQEMLEN). Residues 418–460 (EGMDTLGGQPGGPRTGGLGPPPGSCSPSLSPSSTRSSPATHSP) form a disordered region. The segment covering 425 to 435 (GQPGGPRTGGL) has biased composition (gly residues). Positions 442–460 (CSPSLSPSSTRSSPATHSP) are enriched in low complexity.

Belongs to the nuclear hormone receptor family. NR1 subfamily. As to quaternary structure, heterodimer; with an RXR molecule. Binds DNA preferentially as a RAR/RXR heterodimer. Ubiquitous.

Its subcellular location is the nucleus. Receptor for retinoic acid. Retinoic acid receptors bind as heterodimers to their target response elements in response to their ligands, all-trans or 9-cis retinoic acid, and regulate gene expression in various biological processes. The RAR/RXR heterodimers bind to the retinoic acid response elements (RARE) composed of tandem 5'-AGGTCA-3' sites known as DR1-DR5. Required for hindbrain patterning and appears to be required for skin development. The protein is Retinoic acid receptor alpha (RARA) of Gallus gallus (Chicken).